Here is a 282-residue protein sequence, read N- to C-terminus: NADPH-dependent 7-cyano-7-deazaguanine reductase (282 aa).

88–90 (IES) provides a ligand contact to substrate. Residue 90–91 (SK) coordinates NADPH. Catalysis depends on Cys190, which acts as the Thioimide intermediate. Catalysis depends on Asp197, which acts as the Proton donor. Position 229–230 (229–230 (HE)) interacts with substrate. 258–259 (RG) provides a ligand contact to NADPH.

The protein belongs to the GTP cyclohydrolase I family. QueF type 2 subfamily. As to quaternary structure, homodimer.

The protein localises to the cytoplasm. It catalyses the reaction 7-aminomethyl-7-carbaguanine + 2 NADP(+) = 7-cyano-7-deazaguanine + 2 NADPH + 3 H(+). Its pathway is tRNA modification; tRNA-queuosine biosynthesis. Catalyzes the NADPH-dependent reduction of 7-cyano-7-deazaguanine (preQ0) to 7-aminomethyl-7-deazaguanine (preQ1). The polypeptide is NADPH-dependent 7-cyano-7-deazaguanine reductase (Escherichia coli O9:H4 (strain HS)).